We begin with the raw amino-acid sequence, 194 residues long: Large ribosomal subunit protein bL9 (194 aa).

The span at 166–184 (AENQAQADEQAGELAAAAA) shows a compositional bias: low complexity. The tract at residues 166–194 (AENQAQADEQAGELAAAAAERGDMGGDEE) is disordered. A compositionally biased stretch (basic and acidic residues) spans 185 to 194 (ERGDMGGDEE).

This sequence belongs to the bacterial ribosomal protein bL9 family.

In terms of biological role, binds to the 23S rRNA. In Hyphomonas neptunium (strain ATCC 15444), this protein is Large ribosomal subunit protein bL9.